Consider the following 237-residue polypeptide: Carboxy-S-adenosyl-L-methionine synthase (237 aa).

Residues Tyr-40, 65-67 (GCS), 116-117 (DI), Asn-131, and Arg-194 each bind S-adenosyl-L-methionine.

Belongs to the class I-like SAM-binding methyltransferase superfamily. Cx-SAM synthase family. In terms of assembly, homodimer.

It carries out the reaction prephenate + S-adenosyl-L-methionine = carboxy-S-adenosyl-L-methionine + 3-phenylpyruvate + H2O. Catalyzes the conversion of S-adenosyl-L-methionine (SAM) to carboxy-S-adenosyl-L-methionine (Cx-SAM). This is Carboxy-S-adenosyl-L-methionine synthase from Dichelobacter nodosus (strain VCS1703A).